The following is a 194-amino-acid chain: Histone H1.0 (194 aa).

Position 1 is an N-acetylmethionine (methionine 1). The segment covering methionine 1–alanine 11 has biased composition (low complexity). The segment at methionine 1–serine 29 is disordered. Position 2 is an N-acetylthreonine; in Histone H1.0, N-terminally processed (threonine 2). An H15 domain is found at aspartate 24–lysine 97. The residue at position 42 (arginine 42) is a Citrulline. Residues threonine 84–lysine 194 form a disordered region. Serine 104 is modified (ADP-ribosylserine). Positions valine 105–lysine 194 are enriched in basic residues.

Belongs to the histone H1/H5 family. ADP-ribosylated on Ser-104 in response to DNA damage.

It localises to the nucleus. Its subcellular location is the chromosome. Histones H1 are necessary for the condensation of nucleosome chains into higher-order structures. The histones H1.0 are found in cells that are in terminal stages of differentiation or that have low rates of cell division. This Pongo abelii (Sumatran orangutan) protein is Histone H1.0 (H1-0).